We begin with the raw amino-acid sequence, 266 residues long: Putative hydro-lyase Jann_2570 (266 aa).

This sequence belongs to the D-glutamate cyclase family.

This Jannaschia sp. (strain CCS1) protein is Putative hydro-lyase Jann_2570.